A 144-amino-acid polypeptide reads, in one-letter code: Granulocyte-macrophage colony-stimulating factor (144 aa).

The first 17 residues, 1-17, serve as a signal peptide directing secretion; that stretch reads MWLQNLLLLGTVVCSIS. The O-linked (GalNAc...) serine glycan is linked to Ser24. O-linked (GalNAc...) threonine glycosylation occurs at Thr27. N-linked (GlcNAc...) asparagine glycans are attached at residues Asn44, Asn47, and Asn54. 2 disulfide bridges follow: Cys71–Cys113 and Cys105–Cys138.

Belongs to the GM-CSF family. As to quaternary structure, monomer. The signaling GM-CSF receptor complex is a dodecamer of two head-to-head hexamers of two alpha, two beta, and two ligand subunits.

It is found in the secreted. In terms of biological role, cytokine that stimulates the growth and differentiation of hematopoietic precursor cells from various lineages, including granulocytes, macrophages, eosinophils and erythrocytes. This Sus scrofa (Pig) protein is Granulocyte-macrophage colony-stimulating factor (CSF2).